The chain runs to 108 residues: UPF0102 protein Tpet_0671 (108 aa).

It belongs to the UPF0102 family.

The chain is UPF0102 protein Tpet_0671 from Thermotoga petrophila (strain ATCC BAA-488 / DSM 13995 / JCM 10881 / RKU-1).